Here is a 203-residue protein sequence, read N- to C-terminus: Putative 3-methyladenine DNA glycosylase (203 aa).

This sequence belongs to the DNA glycosylase MPG family.

The sequence is that of Putative 3-methyladenine DNA glycosylase from Desulfitobacterium hafniense (strain Y51).